Here is a 278-residue protein sequence, read N- to C-terminus: Large ribosomal subunit protein uL2 (278 aa).

A disordered region spans residues 223–278; that stretch reads RGSAMNPNDHPHGGGEGKAPVGRKAPMTPWGKKALGVKTRNKKKASTKLIVRRRTK. Over residues 261–278 the composition is skewed to basic residues; it reads TRNKKKASTKLIVRRRTK.

It belongs to the universal ribosomal protein uL2 family. Part of the 50S ribosomal subunit. Forms a bridge to the 30S subunit in the 70S ribosome.

One of the primary rRNA binding proteins. Required for association of the 30S and 50S subunits to form the 70S ribosome, for tRNA binding and peptide bond formation. It has been suggested to have peptidyltransferase activity; this is somewhat controversial. Makes several contacts with the 16S rRNA in the 70S ribosome. The protein is Large ribosomal subunit protein uL2 of Spiroplasma kunkelii.